Reading from the N-terminus, the 356-residue chain is Methionine import ATP-binding protein MetN (356 aa).

Residues 7–250 (IKLDNIDVTF…PRESLTQDFI (244 aa)) enclose the ABC transporter domain. 43–50 (GYSGAGKS) contributes to the ATP binding site.

The protein belongs to the ABC transporter superfamily. Methionine importer (TC 3.A.1.24) family. In terms of assembly, the complex is composed of two ATP-binding proteins (MetN), two transmembrane proteins (MetI) and a solute-binding protein (MetQ).

It localises to the cell membrane. It catalyses the reaction L-methionine(out) + ATP + H2O = L-methionine(in) + ADP + phosphate + H(+). It carries out the reaction D-methionine(out) + ATP + H2O = D-methionine(in) + ADP + phosphate + H(+). In terms of biological role, part of the ABC transporter complex MetNIQ involved in methionine import. Responsible for energy coupling to the transport system. The protein is Methionine import ATP-binding protein MetN of Streptococcus agalactiae serotype Ia (strain ATCC 27591 / A909 / CDC SS700).